The chain runs to 760 residues: Serine/threonine-protein kinase PknG (760 aa).

A disordered region spans residues 1–31 (MTSPENPDLPDADDAYVDSGPGTQPASLEDL). Positions 161–403 (YEIKGCIAHG…SAEEMSSQLL (243 aa)) constitute a Protein kinase domain. Residues 167 to 175 (IAHGGLGWV) and lysine 191 each bind ATP. The active-site Proton acceptor is aspartate 286.

It belongs to the protein kinase superfamily. Ser/Thr protein kinase family. As to quaternary structure, interacts with GarA in vitro.

It carries out the reaction L-seryl-[protein] + ATP = O-phospho-L-seryl-[protein] + ADP + H(+). The catalysed reaction is L-threonyl-[protein] + ATP = O-phospho-L-threonyl-[protein] + ADP + H(+). This Mycolicibacterium smegmatis (strain ATCC 700084 / mc(2)155) (Mycobacterium smegmatis) protein is Serine/threonine-protein kinase PknG (pknG).